The primary structure comprises 782 residues: LPS-assembly protein LptD (782 aa).

The first 24 residues, 1 to 24 (MKKNSYTRLSIAILSTLYSVSSLA), serve as a signal peptide directing secretion.

It belongs to the LptD family. Component of the lipopolysaccharide transport and assembly complex. Interacts with LptE and LptA.

It localises to the cell outer membrane. Functionally, together with LptE, is involved in the assembly of lipopolysaccharide (LPS) at the surface of the outer membrane. This chain is LPS-assembly protein LptD, found in Pasteurella multocida (strain Pm70).